Consider the following 585-residue polypeptide: Testis-specific serine kinase substrate (585 aa).

Residues 91–108 (EPDSSGTDSTTEDSGPLA) are compositionally biased toward low complexity. Positions 91-125 (EPDSSGTDSTTEDSGPLALPGPPASPTTPWAPEDP) are disordered. Residue Ser-224 is modified to Phosphoserine. Disordered stretches follow at residues 264 to 312 (HGLS…SEQE) and 559 to 585 (LEGSTGAMGGGSNGGAPPKRGSPGSEQ). Ser-281 carries the phosphoserine; by TSSK1 and TSSK2 modification. A Phosphoserine modification is found at Ser-309.

Phosphorylated on serine residue(s) by STK22A/TSSK1 and STK22B/TSSK2. Testis specific.

The protein localises to the cytoplasm. It is found in the cytoskeleton. Its subcellular location is the microtubule organizing center. It localises to the centrosome. The protein resides in the centriole. The protein localises to the cytoplasmic vesicle. It is found in the secretory vesicle. Its subcellular location is the acrosome. May play a role in testicular physiology, most probably in the process of spermatogenesis or spermatid development. The chain is Testis-specific serine kinase substrate (Tsks) from Mus musculus (Mouse).